The primary structure comprises 831 residues: Periplasmic nitrate reductase (831 aa).

The segment at residues 1–38 (MSMARRDFIKQTAAAAAATVAGVPLTGYTQNIVTESEA) is a signal peptide (tat-type signal). Positions 41 to 97 (LKWSKAPCRFCGTGCGVNVAVKDNQVVATHGDFNAEVNKGLNCVKGYFLSKIMYGSD) constitute a 4Fe-4S Mo/W bis-MGD-type domain. [4Fe-4S] cluster is bound by residues Cys48, Cys51, Cys55, and Cys83. Mo-bis(molybdopterin guanine dinucleotide)-binding positions include Lys85, Gln152, Asn177, Cys181, 214–221 (WGSNMAEM), 245–249 (STFEH), 264–266 (QSD), Met375, Gln379, Asn485, 511–512 (SD), Lys534, Asp561, and 721–730 (TGRVLEHWHS). Trp797 is a binding site for substrate. Residues Asn805 and Lys822 each coordinate Mo-bis(molybdopterin guanine dinucleotide).

Belongs to the prokaryotic molybdopterin-containing oxidoreductase family. NasA/NapA/NarB subfamily. Component of the periplasmic nitrate reductase NapAB complex composed of NapA and NapB. [4Fe-4S] cluster serves as cofactor. Requires Mo-bis(molybdopterin guanine dinucleotide) as cofactor. Predicted to be exported by the Tat system. The position of the signal peptide cleavage has not been experimentally proven.

The protein resides in the periplasm. The enzyme catalyses 2 Fe(II)-[cytochrome] + nitrate + 2 H(+) = 2 Fe(III)-[cytochrome] + nitrite + H2O. Its function is as follows. Catalytic subunit of the periplasmic nitrate reductase complex NapAB. Receives electrons from NapB and catalyzes the reduction of nitrate to nitrite. The protein is Periplasmic nitrate reductase of Bordetella parapertussis (strain 12822 / ATCC BAA-587 / NCTC 13253).